The chain runs to 349 residues: Inositol 2-dehydrogenase (349 aa).

It belongs to the Gfo/Idh/MocA family. Homotetramer.

The enzyme catalyses myo-inositol + NAD(+) = scyllo-inosose + NADH + H(+). In terms of biological role, involved in the oxidation of myo-inositol (MI) to 2-keto-myo-inositol (2KMI or 2-inosose). This Mycolicibacterium gilvum (strain PYR-GCK) (Mycobacterium gilvum (strain PYR-GCK)) protein is Inositol 2-dehydrogenase.